The sequence spans 124 residues: Large ribosomal subunit protein uL18 (124 aa).

This sequence belongs to the universal ribosomal protein uL18 family. As to quaternary structure, part of the 50S ribosomal subunit; part of the 5S rRNA/L5/L18/L25 subcomplex. Contacts the 5S and 23S rRNAs.

This is one of the proteins that bind and probably mediate the attachment of the 5S RNA into the large ribosomal subunit, where it forms part of the central protuberance. The sequence is that of Large ribosomal subunit protein uL18 from Orientia tsutsugamushi (strain Ikeda) (Rickettsia tsutsugamushi).